The chain runs to 190 residues: METSTQRTGSHLAQTAAARHSASSRGEAARVSSRDELAEMAAASQGNFEGKFESLDLAELAKKQPWWRTLFGQESGPSAEKYSVATQLLIGGVTGWCTGFIFQKVGKLAATAVGGGFFLLQLANHTGYIKVDWQRVEKDMKKAKEQLKIRKSNQIPTEVKSKAEEVVSFVKKNVLVTGGFFGGFLLGMAS.

Positions 1-13 are enriched in polar residues; that stretch reads METSTQRTGSHLA. The disordered stretch occupies residues 1–31; that stretch reads METSTQRTGSHLAQTAAARHSASSRGEAARV. The Cytoplasmic portion of the chain corresponds to 1–81; it reads METSTQRTGS…GQESGPSAEK (81 aa). 2 positions are modified to phosphoserine: S10 and S54. A helical membrane pass occupies residues 82–102; that stretch reads YSVATQLLIGGVTGWCTGFIF. Residues 103-108 lie on the Mitochondrial intermembrane side of the membrane; it reads QKVGKL. The chain crosses the membrane as a helical span at residues 109 to 129; it reads AATAVGGGFFLLQLANHTGYI. Topologically, residues 130-165 are cytoplasmic; it reads KVDWQRVEKDMKKAKEQLKIRKSNQIPTEVKSKAEE. Residue S152 is modified to Phosphoserine. A helical transmembrane segment spans residues 166–186; it reads VVSFVKKNVLVTGGFFGGFLL. The Mitochondrial intermembrane portion of the chain corresponds to 187 to 190; the sequence is GMAS.

The protein belongs to the FUN14 family.

Its subcellular location is the mitochondrion outer membrane. It localises to the nucleus. Binds directly and specifically 1,2-Diacyl-sn-glycero-3-phospho-(1'-myo-inositol-3',4',5'-bisphosphate) (PIP3) leading to the recruitment of PIP3 to mitochondria and may play a role in the regulation of the platelet activation via AKT/GSK3B/cGMP signaling pathways. May act as transcription factor that regulates SREBP1 (isoform SREBP-1C) expression in order to modulate triglyceride (TG) homeostasis in hepatocytes. The polypeptide is FUN14 domain-containing protein 2 (Bos taurus (Bovine)).